A 350-amino-acid chain; its full sequence is Small ribosomal subunit biogenesis GTPase RsgA (350 aa).

The segment covering 1–17 (MSKNKLSKGQQRRVNAN) has biased composition (polar residues). A disordered region spans residues 1–27 (MSKNKLSKGQQRRVNANHQRRLKTSAE). One can recognise a CP-type G domain in the interval 104-273 (TSVLTRPDFY…VIDSPGVREF (170 aa)). GTP-binding positions include 160–163 (NKID) and 214–222 (GQSGVGKSS). Zn(2+) contacts are provided by Cys-297, Cys-302, His-304, and Cys-310.

This sequence belongs to the TRAFAC class YlqF/YawG GTPase family. RsgA subfamily. In terms of assembly, monomer. Associates with 30S ribosomal subunit, binds 16S rRNA. Zn(2+) is required as a cofactor.

Its subcellular location is the cytoplasm. Functionally, one of several proteins that assist in the late maturation steps of the functional core of the 30S ribosomal subunit. Helps release RbfA from mature subunits. May play a role in the assembly of ribosomal proteins into the subunit. Circularly permuted GTPase that catalyzes slow GTP hydrolysis, GTPase activity is stimulated by the 30S ribosomal subunit. The protein is Small ribosomal subunit biogenesis GTPase RsgA of Salmonella dublin (strain CT_02021853).